We begin with the raw amino-acid sequence, 881 residues long: EEF1AKMT4-ECE2 readthrough transcript protein (881 aa).

A methyltransferase-like region region spans residues 1 to 160; it reads MASPRTPVSP…VHTVDQVLSE (160 aa). The Cytoplasmic portion of the chain corresponds to 1–178; that stretch reads MASPRTPVSP…QLFGSHTQLE (178 aa). 2 residues coordinate S-adenosyl-L-methionine: W26 and Y30. Y39 is modified (phosphotyrosine). Residues W41, G66, 88 to 89, 113 to 114, and K130 contribute to the S-adenosyl-L-methionine site; these read DY and DV. At H174 the chain carries Phosphoserine. A helical; Signal-anchor for type II membrane protein transmembrane segment spans residues 179-199; the sequence is LVLAGLILVLAALLLGCLVAL. At 200–881 the chain is on the lumenal side; the sequence is WVHRDPAHST…MNPGQLCEVW (682 aa). One can recognise a Peptidase M13 domain in the interval 209-881; that stretch reads TCVTEACIRV…MNPGQLCEVW (673 aa). 5 cysteine pairs are disulfide-bonded: C210/C215, C233/C866, C241/C826, C297/C546, and C755/C878. N-linked (GlcNAc...) asparagine glycosylation is found at N277, N281, N322, N382, N427, N494, and N650. Residue H718 participates in Zn(2+) binding. Residue E719 is part of the active site. Residue H722 participates in Zn(2+) binding. Residues N743 and N751 are each glycosylated (N-linked (GlcNAc...) asparagine). E778 is a Zn(2+) binding site. The active-site Proton donor is the D782.

The protein in the N-terminal section; belongs to the methyltransferase superfamily. In the C-terminal section; belongs to the peptidase M13 family. Zn(2+) is required as a cofactor. As to expression, expressed at high levels in central nervous system. Expressed in adrenal glands, ovary and uterus, and at low levels in heart.

The protein resides in the golgi apparatus membrane. Its subcellular location is the cytoplasmic vesicle. It localises to the secretory vesicle membrane. It catalyses the reaction Hydrolysis of the 21-Trp-|-Val-22 bond in big endothelin to form endothelin 1.. With respect to regulation, inhibited by phosphoramidon. Converts big endothelin-1 to endothelin-1. May also have methyltransferase activity. May play a role in amyloid-beta processing. In Mus musculus (Mouse), this protein is EEF1AKMT4-ECE2 readthrough transcript protein.